The chain runs to 1472 residues: Type IV pilus biogenesis factor PilY1 homolog PD_1611 (1472 aa).

Ca(2+) contacts are provided by Asp-1170, Asp-1172, Asp-1174, Leu-1176, and Asp-1178. Polar residues predominate over residues 1383–1397 (RGSRSSIGNSDTGAV). Residues 1383 to 1403 (RGSRSSIGNSDTGAVSTGGDA) form a disordered region.

It belongs to the PilY1 family.

It localises to the fimbrium. In terms of biological role, one of the three PilY1 homologs of X.fastidiosa, which are involved in bacterial twitching motility as component of the filamentous type IV pili (T4P). The twitching motility of this protein is enhanced by calcium, which may provide the bacterium an adaptive advantage in environments with high calcium concentrations. The chain is Type IV pilus biogenesis factor PilY1 homolog PD_1611 from Xylella fastidiosa (strain Temecula1 / ATCC 700964).